The primary structure comprises 121 residues: Small ribosomal subunit protein uS13 (121 aa).

Residues 91 to 121 are disordered; that stretch reads HRRGLPTRGQNTKNNARTRKGPVKTVANKKK. The segment covering 106-121 has biased composition (basic residues); sequence ARTRKGPVKTVANKKK.

Belongs to the universal ribosomal protein uS13 family. As to quaternary structure, part of the 30S ribosomal subunit. Forms a loose heterodimer with protein S19. Forms two bridges to the 50S subunit in the 70S ribosome.

Its function is as follows. Located at the top of the head of the 30S subunit, it contacts several helices of the 16S rRNA. In the 70S ribosome it contacts the 23S rRNA (bridge B1a) and protein L5 of the 50S subunit (bridge B1b), connecting the 2 subunits; these bridges are implicated in subunit movement. Contacts the tRNAs in the A and P-sites. In Macrococcus caseolyticus (strain JCSC5402) (Macrococcoides caseolyticum), this protein is Small ribosomal subunit protein uS13.